Here is a 202-residue protein sequence, read N- to C-terminus: Pyrrolidone-carboxylate peptidase (202 aa).

Residues Glu-78, Cys-141, and His-165 contribute to the active site.

The protein belongs to the peptidase C15 family. In terms of assembly, homotetramer.

It localises to the cytoplasm. The catalysed reaction is Release of an N-terminal pyroglutamyl group from a polypeptide, the second amino acid generally not being Pro.. Functionally, removes 5-oxoproline from various penultimate amino acid residues except L-proline. This chain is Pyrrolidone-carboxylate peptidase, found in Thermosipho melanesiensis (strain DSM 12029 / CIP 104789 / BI429).